Consider the following 255-residue polypeptide: 3-deoxy-manno-octulosonate cytidylyltransferase (255 aa).

This sequence belongs to the KdsB family.

It is found in the cytoplasm. It catalyses the reaction 3-deoxy-alpha-D-manno-oct-2-ulosonate + CTP = CMP-3-deoxy-beta-D-manno-octulosonate + diphosphate. Its pathway is nucleotide-sugar biosynthesis; CMP-3-deoxy-D-manno-octulosonate biosynthesis; CMP-3-deoxy-D-manno-octulosonate from 3-deoxy-D-manno-octulosonate and CTP: step 1/1. The protein operates within bacterial outer membrane biogenesis; lipopolysaccharide biosynthesis. Functionally, activates KDO (a required 8-carbon sugar) for incorporation into bacterial lipopolysaccharide in Gram-negative bacteria. The polypeptide is 3-deoxy-manno-octulosonate cytidylyltransferase (Glaesserella parasuis serovar 5 (strain SH0165) (Haemophilus parasuis)).